The sequence spans 326 residues: RNA/RNP complex-1-interacting phosphatase (326 aa).

A disordered region spans residues 1 to 28; sequence MNQWHYGRYSRGRDFTARAPPKKKGKNQ. Residues 59–206 enclose the Tyrosine-protein phosphatase domain; that stretch reads FEAKLMPEEC…LQKRRVRKNQ (148 aa). The active-site Phosphocysteine intermediate is C150. 151–156 provides a ligand contact to substrate; the sequence is THGLNR. R156 acts as the Proton donor/acceptor in catalysis. The tract at residues 200–258 is disordered; the sequence is RRVRKNQNASASRSGGLEDSAHLTEQVHTTNKPVNKGPKKSRRGGHLESSQHVQTQSSA. The span at 247-258 shows a compositional bias: polar residues; it reads ESSQHVQTQSSA.

This sequence belongs to the protein-tyrosine phosphatase family. Non-receptor class dual specificity subfamily. In terms of assembly, monomer. May interact with SFRS7 and SFRS9/SRP30C.

The protein localises to the nucleus. Its subcellular location is the nucleus speckle. Functionally, possesses RNA 5'-triphosphatase and diphosphatase activities, but displays a poor protein-tyrosine phosphatase activity. In addition, has phosphatase activity with ATP, ADP and O-methylfluorescein phosphate (in vitro). Binds to RNA. May participate in nuclear mRNA metabolism. This is RNA/RNP complex-1-interacting phosphatase (Dusp11) from Rattus norvegicus (Rat).